Here is a 64-residue protein sequence, read N- to C-terminus: Endodeoxyribonuclease toxin RalR (64 aa).

Ca(2+) is required as a cofactor. It depends on Mg(2+) as a cofactor.

With respect to regulation, inhibited by EDTA. In terms of biological role, toxic component of a type I toxin-antitoxin (TA) system. Upon overexpression inhibits growth and reduces colony-forming units in both the presence and absence of the Rac prophage, cells become filamentous. Has deoxyribonuclease activity (probably endonucleolytic), does not digest RNA. Its toxic effects are neutralized by sRNA antitoxin RalA, which is encoded in trans on the opposite DNA strand. Has RAL-like activity. This chain is Endodeoxyribonuclease toxin RalR (ralR), found in Escherichia coli (strain K12).